We begin with the raw amino-acid sequence, 131 residues long: Probable ATP synthase subunit g 1, mitochondrial (131 aa).

This sequence belongs to the ATPase g subunit family. As to quaternary structure, subunit of the F-type ATPase which has 2 components, CF(1) - the catalytic core - and CF(0) - the membrane proton channel.

It is found in the mitochondrion membrane. Mitochondrial membrane ATP synthase (F(1)F(0) ATP synthase or Complex V) produces ATP from ADP in the presence of a proton gradient across the membrane which is generated by electron transport complexes of the respiratory chain. F-type ATPases consist of two structural domains, F(1) - containing the extramembraneous catalytic core, and F(0) - containing the membrane proton channel, linked together by a central stalk and a peripheral stalk. During catalysis, ATP synthesis in the catalytic domain of F(1) is coupled via a rotary mechanism of the central stalk subunits to proton translocation. Part of the complex F(0) domain. Minor subunit located with subunit a in the membrane. The protein is Probable ATP synthase subunit g 1, mitochondrial of Caenorhabditis elegans.